A 192-amino-acid polypeptide reads, in one-letter code: Adenylate kinase (192 aa).

ATP is bound at residue 11 to 16 (GSGKGT). The interval 31 to 60 (STGDIFRANVKGETPLGIEAKKYMDNGDFV) is NMP. AMP contacts are provided by residues threonine 32, arginine 37, 58 to 60 (DFV), 86 to 89 (GYPR), and glutamine 93. Residues 127–137 (GRAKETGRSDD) are LID. Arginine 128 provides a ligand contact to ATP. AMP contacts are provided by arginine 134 and arginine 145. Glycine 173 is an ATP binding site.

This sequence belongs to the adenylate kinase family. As to quaternary structure, monomer.

Its subcellular location is the cytoplasm. It carries out the reaction AMP + ATP = 2 ADP. The protein operates within purine metabolism; AMP biosynthesis via salvage pathway; AMP from ADP: step 1/1. Its function is as follows. Catalyzes the reversible transfer of the terminal phosphate group between ATP and AMP. Plays an important role in cellular energy homeostasis and in adenine nucleotide metabolism. This is Adenylate kinase from Pseudarthrobacter chlorophenolicus (strain ATCC 700700 / DSM 12829 / CIP 107037 / JCM 12360 / KCTC 9906 / NCIMB 13794 / A6) (Arthrobacter chlorophenolicus).